A 177-amino-acid polypeptide reads, in one-letter code: Large ribosomal subunit protein uL6 (177 aa).

Belongs to the universal ribosomal protein uL6 family. In terms of assembly, part of the 50S ribosomal subunit.

Its function is as follows. This protein binds to the 23S rRNA, and is important in its secondary structure. It is located near the subunit interface in the base of the L7/L12 stalk, and near the tRNA binding site of the peptidyltransferase center. The sequence is that of Large ribosomal subunit protein uL6 from Agrobacterium fabrum (strain C58 / ATCC 33970) (Agrobacterium tumefaciens (strain C58)).